The primary structure comprises 256 residues: Sorbitol dehydrogenase (256 aa).

Residues 15–17 (RGI), Asp-36, 59–60 (DV), Asn-86, Tyr-152, Lys-156, and 182–187 (PGVVDG) contribute to the NAD(+) site. Tyr-152 functions as the Proton acceptor in the catalytic mechanism.

This sequence belongs to the short-chain dehydrogenases/reductases (SDR) family. Homodimer. May function as a tetramer in vivo.

It carries out the reaction keto-D-fructose + NADH + H(+) = D-sorbitol + NAD(+). The catalysed reaction is galactitol + NAD(+) = keto-D-tagatose + NADH + H(+). The enzyme catalyses L-iditol + NAD(+) = keto-L-sorbose + NADH + H(+). Its activity is regulated as follows. Inhibited by DTT, N-bromosuccinimide and iodoacetic acid. Catalyzes the oxidation of D-sorbitol (D-glucitol) to D-fructose. Can also catalyze the oxidation of galactitol to D-tagatose and the oxidation of L-iditol, with lower efficiency. This is Sorbitol dehydrogenase (polS) from Cereibacter sphaeroides (Rhodobacter sphaeroides).